The sequence spans 183 residues: Ribulose bisphosphate carboxylase small subunit, chloroplastic 3 (183 aa).

A chloroplast-targeting transit peptide spans methionine 1–glutamine 57.

This sequence belongs to the RuBisCO small chain family. In terms of assembly, heterohexadecamer of 8 large and 8 small subunits.

The protein localises to the plastid. It localises to the chloroplast. RuBisCO catalyzes two reactions: the carboxylation of D-ribulose 1,5-bisphosphate, the primary event in carbon dioxide fixation, as well as the oxidative fragmentation of the pentose substrate. Both reactions occur simultaneously and in competition at the same active site. Although the small subunit is not catalytic it is essential for maximal activity. The protein is Ribulose bisphosphate carboxylase small subunit, chloroplastic 3 of Mesembryanthemum crystallinum (Common ice plant).